The following is a 731-amino-acid chain: Inclusion body clearance protein IML2 (731 aa).

Positions 1 to 26 (MFRVFGSFGSKGNQSSGEEQSTKTKQ) are disordered. A compositionally biased stretch (polar residues) spans 10 to 26 (SKGNQSSGEEQSTKTKQ). 3 positions are modified to phosphoserine: serine 265, serine 268, and serine 378. Threonine 380 carries the phosphothreonine modification. Residues serine 383 and serine 392 each carry the phosphoserine modification.

The protein belongs to the IML2 family. Interacts with lipid droplet proteins PET10 and PDR16.

It is found in the cytoplasm. The protein localises to the nucleus. Inclusion body (IB) resident protein that interacts strongly with lipid droplet (LD) proteins. Involved in LD-mediated IB clearing after protein folding stress, probably by enabling access to the IBs of an LD-stored soluble sterol derivative that acts as a chaperone in inclusion clearing. The chain is Inclusion body clearance protein IML2 (IML2) from Saccharomyces cerevisiae (strain YJM789) (Baker's yeast).